The primary structure comprises 176 residues: Shikimate kinase (176 aa).

14–19 contributes to the ATP binding site; it reads GAGKSS. S18 lines the Mg(2+) pocket. Residues D36, R60, and G82 each contribute to the substrate site. R120 provides a ligand contact to ATP. R138 contacts substrate.

The protein belongs to the shikimate kinase family. Monomer. Requires Mg(2+) as cofactor.

It is found in the cytoplasm. The catalysed reaction is shikimate + ATP = 3-phosphoshikimate + ADP + H(+). Its pathway is metabolic intermediate biosynthesis; chorismate biosynthesis; chorismate from D-erythrose 4-phosphate and phosphoenolpyruvate: step 5/7. Catalyzes the specific phosphorylation of the 3-hydroxyl group of shikimic acid using ATP as a cosubstrate. The protein is Shikimate kinase of Dehalococcoides mccartyi (strain ATCC BAA-2100 / JCM 16839 / KCTC 5957 / BAV1).